Here is a 526-residue protein sequence, read N- to C-terminus: tRNA (guanine(26)-N(2))-dimethyltransferase (526 aa).

Polar residues predominate over residues Met1–Asp10. The tract at residues Met1–Glu20 is disordered. The Trm1 methyltransferase domain occupies Thr22 to Tyr441. Positions 47, 104, and 122 each coordinate S-adenosyl-L-methionine. Zn(2+)-binding residues include Cys286, Cys289, Cys325, and Cys328. The segment at Lys498–Glu526 is disordered.

The protein belongs to the class I-like SAM-binding methyltransferase superfamily. Trm1 family.

The catalysed reaction is guanosine(26) in tRNA + 2 S-adenosyl-L-methionine = N(2)-dimethylguanosine(26) in tRNA + 2 S-adenosyl-L-homocysteine + 2 H(+). Functionally, dimethylates a single guanine residue at position 26 of most tRNAs using S-adenosyl-L-methionine as donor of the methyl groups. The sequence is that of tRNA (guanine(26)-N(2))-dimethyltransferase (trm-1) from Caenorhabditis elegans.